Reading from the N-terminus, the 1228-residue chain is AT-rich interactive domain-containing protein 4B (1228 aa).

Disordered regions lie at residues 123-167 and 266-307; these read LPLT…DDRK and KTEL…PFPE. 3 positions are modified to phosphoserine: Ser-276, Ser-295, and Ser-296. A compositionally biased stretch (acidic residues) spans 277–305; it reads EAEEEEEEEDDEKEKEDNSSEEEEEIEPF. Positions 306–398 constitute an ARID domain; that stretch reads PEERENFLQQ…YLYGFEEYCR (93 aa). Glycyl lysine isopeptide (Lys-Gly) (interchain with G-Cter in SUMO2) cross-links involve residues Lys-428 and Lys-461. Residues 437–464 are compositionally biased toward basic and acidic residues; the sequence is EVNVEDSKNMIPKEETPAEDESERKENI. Disordered stretches follow at residues 437–466, 479–525, 539–606, 620–802, 825–1129, and 1168–1204; these read EVNVEDSKNMIPKEETPAEDESERKENIKP, PAQS…EQAR, RPAD…SDTG, LQAS…EEKR, LNNS…RLPK, and SEVASIDRRRKRLKKKERESAATSSSSSSPSSSSITA. Position 482 is a phosphoserine (Ser-482). The span at 483 to 511 shows a compositional bias: basic and acidic residues; the sequence is DQEKEANITKLEEKESLEDKDGATARAEE. Residues 546–555 are compositionally biased toward basic residues; the sequence is PKIKHRKKIK. The segment covering 556–569 has biased composition (basic and acidic residues); that stretch reads NKLDKEKDRDEKYS. Ser-579, Ser-581, and Ser-588 each carry phosphoserine. Residues 596–606 show a composition bias toward basic and acidic residues; that stretch reads DLADAKNSDTG. Residue Ser-630 is modified to Phosphoserine. Composition is skewed to basic and acidic residues over residues 635 to 667 and 691 to 700; these read ERCAQDPESSSKDESKVEHSAHSRSELISKEEL and SPERLRKDVE. Lys-664 participates in a covalent cross-link: Glycyl lysine isopeptide (Lys-Gly) (interchain with G-Cter in SUMO2). A phosphoserine mark is found at Ser-691 and Ser-703. Acidic residues predominate over residues 701-713; sequence AISEDTDFEEEDE. Phosphothreonine is present on Thr-706. Positions 721–730 are enriched in basic and acidic residues; sequence VKKDTTDKAL. The segment covering 744–753 has biased composition (polar residues); the sequence is IQTNCLQSGS. 3 stretches are compositionally biased toward basic and acidic residues: residues 755–765, 825–843, and 911–926; these read GKKEDRTKSKE, LNNSDERLQNNRAKDRKDV, and KPVEEKPLEVSDRKTE. The span at 927-937 shows a compositional bias: polar residues; sequence FPSSGSNSVLN. Ser-930 carries the post-translational modification Phosphoserine. Thr-942 bears the Phosphothreonine mark. Residues 944 to 965 are compositionally biased toward low complexity; that stretch reads ESPSSVTVTETSQQQSSVTVSV. Ser-945 is modified (phosphoserine). Positions 972–981 are enriched in basic and acidic residues; that stretch reads EEVRSIKSET. Low complexity predominate over residues 1003–1017; the sequence is SSPAGFNASVSSSSS. Basic residues predominate over residues 1046–1064; that stretch reads KKQKRSHKATVVNNKKKGK. The residue at position 1066 (Thr-1066) is a Phosphothreonine. Phosphoserine occurs at positions 1068, 1069, 1071, and 1075. Residues 1112-1124 are compositionally biased toward basic and acidic residues; that stretch reads KNGDKDPDLKEPS. Positions 1141 to 1186 form a coiled coil; that stretch reads ENMTSAERISILQEKLQEIRKHYLSLKSEVASIDRRRKRLKKKERE. Low complexity predominate over residues 1188–1204; it reads AATSSSSSSPSSSSITA.

As to quaternary structure, component of a Sin3A corepressor complex consisting of SIN3A, SAP130, SUDS3/SAP45, SAP180, HDAC1 and HDAC2. Interacts with ARID4A. Interacts with AR.

It is found in the nucleus. Its function is as follows. Acts as a transcriptional repressor. May function in the assembly and/or enzymatic activity of the Sin3A corepressor complex or in mediating interactions between the complex and other regulatory complexes. Plays a role in the regulation of epigenetic modifications at the PWS/AS imprinting center near the SNRPN promoter, where it might function as part of a complex with RB1 and ARID4A. Involved in spermatogenesis, together with ARID4A, where it functions as a transcriptional coactivator for AR (androgen receptor) and enhances expression of genes required for sperm maturation. Regulates expression of the tight junction protein CLDN3 in the testis, which is important for integrity of the blood-testis barrier. Plays a role in myeloid homeostasis where it regulates the histone methylation state of bone marrow cells and expression of various genes involved in hematopoiesis. May function as a leukemia suppressor. This is AT-rich interactive domain-containing protein 4B (Arid4b) from Rattus norvegicus (Rat).